We begin with the raw amino-acid sequence, 417 residues long: MPPLLRGGFGITFAAMQVQRLEPYFGFARFIARRMSCLRVLQISGSLTFTTLLALVPLFTIALSVISAFPVFSDYSTRFKIMLLSTLVPEFAGKVITVYMRQFADNAEKLTAAGIVMLGVTALMLMSTIERTFNAIWGVRRGRPWLQQSMVYWTVLTLGPLVLGGSLLSWRWLFKATRLEKNLPLLASVLEAGGTIVLTALVLALLYRIVPNRFVPFRHAVWGALVTSVLLELTKMGFGFYIGQVASYQLVYGAFASIPIFLLWVYCLWLVVLAGAVFTSALSYWEGDAWRRRNEPHRRFQDALEVLLLLDAAHARGEALTPRQLRQQVKVGYDELGLVLDRLAQRGYVQKGHGDAWVLMRRAAAINLSDLFQIFVYRRDASAGDALDATLAELLGPLTEQLQAVTVADLARRVGRK.

The next 7 membrane-spanning stretches (helical) occupy residues 52–72, 79–99, 110–130, 150–170, 185–205, 214–234, and 258–278; these read LLALVPLFTIALSVISAFPVF, FKIMLLSTLVPEFAGKVITVY, LTAAGIVMLGVTALMLMSTIE, MVYWTVLTLGPLVLGGSLLSW, LLASVLEAGGTIVLTALVLAL, FVPFRHAVWGALVTSVLLELT, and IPIFLLWVYCLWLVVLAGAVF.

The protein belongs to the UPF0761 family.

Its subcellular location is the cell inner membrane. This Chromobacterium violaceum (strain ATCC 12472 / DSM 30191 / JCM 1249 / CCUG 213 / NBRC 12614 / NCIMB 9131 / NCTC 9757 / MK) protein is UPF0761 membrane protein CV_0810.